The following is a 604-amino-acid chain: Deuterosome assembly protein 1 (604 aa).

Coiled-coil stretches lie at residues 14–59 (CEAE…NAQT), 85–197 (MTQN…GKKQ), 226–278 (IIEK…ELQS), and 336–399 (QDQP…KQLK). Ser547 is modified (phosphoserine). Residues 558-601 (AAQHFLLEEEKRAKELEKLLNTHIDELQRHTEFTLNKYSKLKQN) adopt a coiled-coil conformation.

The protein belongs to the CEP63 family. Interacts with CEP152; the interaction is mutually exclusive with CEP63.

Its subcellular location is the cytoplasm. Its function is as follows. Key structural component of the deuterosome, a structure that promotes de novo centriole amplification in multiciliated cells. Deuterosome-mediated centriole amplification occurs in terminally differentiated multiciliated cells and can generate more than 100 centrioles. Probably sufficient for the specification and formation of the deuterosome inner core. Interacts with CEP152 and recruits PLK4 to activate centriole biogenesis. The chain is Deuterosome assembly protein 1 from Homo sapiens (Human).